Reading from the N-terminus, the 752-residue chain is Iron-sulfur clusters transporter ABCB7, mitochondrial (752 aa).

The transit peptide at 1-22 (MALLAMHSWRWAAAAAAFEKRR) directs the protein to the mitochondrion. Over 23-140 (HSAILIRPLV…KDRPDLRARV (118 aa)) the chain is Mitochondrial matrix. The region spanning 140-436 (VAISLGFLGG…LGTVYRETRQ (297 aa)) is the ABC transmembrane type-1 domain. A helical transmembrane segment spans residues 141 to 161 (AISLGFLGGAKAMNIVVPFMF). At 162 to 185 (KYAVDSLNQMSGNMLNLSDAPNTV) the chain is on the mitochondrial intermembrane side. A helical transmembrane segment spans residues 186-206 (ATMATAVLIGYGVSRAGAAFF). Topologically, residues 207–259 (NEVRNAVFGKVAQNSIRRIAKNVFLHLHNLDLGFHLSRQTGALSKAIDRGTRG) are mitochondrial matrix. An N6-acetyllysine mark is found at K216 and K251. A helical transmembrane segment spans residues 260–280 (ISFVLSALVFNLLPIMFEVML). Over 281-290 (VSGVLYYKCG) the chain is Mitochondrial intermembrane. A helical membrane pass occupies residues 291–311 (AQFALVTLGTLGTYTAFTVAV). The Mitochondrial matrix segment spans residues 312–382 (TRWRTRFRIE…TLAMLNFGQS (71 aa)). 315-319 (RTRFR) provides a ligand contact to glutathione. S336 carries the post-translational modification Phosphoserine. A Phosphotyrosine modification is found at Y340. T342 carries the phosphothreonine modification. 378–381 (NFGQ) provides a ligand contact to glutathione. The chain crosses the membrane as a helical span at residues 383 to 403 (AIFSVGLTAIMVLASQGIVAG). Topologically, residues 404–409 (TLTVGD) are mitochondrial intermembrane. A helical transmembrane segment spans residues 410 to 430 (LVMVNGLLFQLSLPLNFLGTV). G428 contributes to the glutathione binding site. Residues 431–752 (YRETRQALID…SVKGCGNCSC (322 aa)) lie on the Mitochondrial matrix side of the membrane. The region spanning 472–706 (VAFDNVHFEY…PHSIYSEMWH (235 aa)) is the ABC transporter domain. ATP-binding positions include Y481 and 505 to 516 (GGSGSGKSTIVR).

It belongs to the ABC transporter superfamily. ABCB family. Heavy Metal importer (TC 3.A.1.210) subfamily. In terms of assembly, homodimer or heterodimer. Interacts with C10orf88/PAAT. Forms a complex with ABCB10 and FECH, where a dimeric FECH bridges ABCB7 and ABCB10 homodimers; this complex may be required for cellular iron homeostasis, mitochondrial function and heme biosynthesis. Interacts with FECH. Interacts with ATP5F1A. Interacts with COX4I1; this interaction allows the regulation of cellular iron homeostasis and cellular reactive oxygen species (ROS) levels in cardiomyocytes.

It localises to the mitochondrion inner membrane. It carries out the reaction (glutathione)4[2Fe(III)-2S] cluster(in) + ATP + H2O = (glutathione)4[2Fe(III)-2S] cluster(out) + ADP + phosphate + H(+). Its activity is regulated as follows. ATPase activity is stimulated by glutathione. Its function is as follows. Exports glutathione-coordinated iron-sulfur clusters such as [2Fe-2S]-(GS)4 cluster from the mitochondria to the cytosol in an ATP-dependent manner allowing the assembly of the cytosolic iron-sulfur (Fe/S) cluster-containing proteins and participates in iron homeostasis. Moreover, through a functional complex formed of ABCB7, FECH and ABCB10, also plays a role in the cellular iron homeostasis, mitochondrial function and heme biosynthesis. In cardiomyocytes, regulates cellular iron homeostasis and cellular reactive oxygen species (ROS) levels through its interaction with COX4I1. May also play a role in hematopoiesis. The chain is Iron-sulfur clusters transporter ABCB7, mitochondrial from Homo sapiens (Human).